A 424-amino-acid polypeptide reads, in one-letter code: Putative chloroquine resistance transporter (424 aa).

Topologically, residues 1-56 (MTVIKKGKNKKKNLKNDDRYKELDSLITNGSEIGDNSGRSCIKRFFKIIGNEMKNN) are cytoplasmic. The chain crosses the membrane as a helical span at residues 57–77 (VYVYFLSILYLCVCVMNKVFA). At 78 to 88 (KRTLNKMGNYS) the chain is on the vacuolar side. The N-linked (GlcNAc...) asparagine glycan is linked to asparagine 86. The chain crosses the membrane as a helical span at residues 89-109 (FVTSETHNIICIVVFQLLYFI). Topologically, residues 110–125 (YRKTSTSGYKNESQKN) are cytoplasmic. The helical transmembrane segment at 126-146 (FGWQFFLISLLDASTVIISMI) threads the bilayer. Residues 147 to 156 (GLTRTTGNIQ) lie on the Vacuolar side of the membrane. The helical transmembrane segment at 157 to 177 (SFIMQLIIPVNMYFCFMFLGY) threads the bilayer. Over 178-180 (RYH) the chain is Cytoplasmic. Residues 181-201 (LFNYLGAFIILITIAVVETFL) traverse the membrane as a helical segment. Residues 202 to 209 (SFETQSEN) are Vacuolar-facing. Residues 210–230 (SIIFNLIMISALIPLSFSNMT) form a helical membrane-spanning segment. At 231-248 (REVVFKKHKINILRLNAM) the chain is on the cytoplasmic side. Residues 249 to 269 (VVLFQFFTSLLVLPVYNIPFL) traverse the membrane as a helical segment. Residues 270-317 (KEIYMPFSEMSTNINNGLRCLFYGQNTVVENCGVGMVKMCDNCEGAWK) lie on the Vacuolar side of the membrane. Cystine bridges form between cysteine 289–cysteine 312 and cysteine 301–cysteine 309. The chain crosses the membrane as a helical span at residues 318–338 (TFITFSFFNICDNLLACYIID). Residues 339-346 (KFSTMTYT) lie on the Cytoplasmic side of the membrane. Residues 347-367 (IVSCIQGPAITIAYYFKFLAG) traverse the membrane as a helical segment. Topologically, residues 368–377 (DAVRKPRILD) are vacuolar. A helical transmembrane segment spans residues 378–398 (FLTLFGYLFGTIIYRIGNIIL). At 399–424 (EKKKMVKSQNSNDSEAELTCIETSTA) the chain is on the cytoplasmic side.

Belongs to the CRT-like transporter family.

It is found in the vacuole membrane. Functionally, nutrient transporter. Involved in maintaining the osmotic homeostasis of the digestive vacuole. In Plasmodium yoelii yoelii, this protein is Putative chloroquine resistance transporter.